The sequence spans 160 residues: 6,7-dimethyl-8-ribityllumazine synthase (160 aa).

5-amino-6-(D-ribitylamino)uracil is bound by residues Trp27, 59 to 61, and 81 to 83; these read AIE and VVI. 86 to 87 contributes to the (2S)-2-hydroxy-3-oxobutyl phosphate binding site; that stretch reads QT. His89 functions as the Proton donor in the catalytic mechanism. Asn114 serves as a coordination point for 5-amino-6-(D-ribitylamino)uracil. Arg128 contributes to the (2S)-2-hydroxy-3-oxobutyl phosphate binding site.

The protein belongs to the DMRL synthase family. Homopentamer.

It carries out the reaction (2S)-2-hydroxy-3-oxobutyl phosphate + 5-amino-6-(D-ribitylamino)uracil = 6,7-dimethyl-8-(1-D-ribityl)lumazine + phosphate + 2 H2O + H(+). The protein operates within cofactor biosynthesis; riboflavin biosynthesis; riboflavin from 2-hydroxy-3-oxobutyl phosphate and 5-amino-6-(D-ribitylamino)uracil: step 1/2. Catalyzes the formation of 6,7-dimethyl-8-ribityllumazine by condensation of 5-amino-6-(D-ribitylamino)uracil with 3,4-dihydroxy-2-butanone 4-phosphate. This is the penultimate step in the biosynthesis of riboflavin. The protein is 6,7-dimethyl-8-ribityllumazine synthase of Mycobacterium sp. (strain JLS).